The primary structure comprises 455 residues: Protein king tubby (455 aa).

Residues arginine 35–serine 92 are disordered. Over residues leucine 67–serine 92 the composition is skewed to low complexity. Serine 144 carries the phosphoserine modification.

It belongs to the TUB family.

It is found in the cytoplasm. The protein localises to the nucleus. It localises to the cell projection. Its subcellular location is the cilium membrane. The protein resides in the rhabdomere. This Drosophila virilis (Fruit fly) protein is Protein king tubby.